The chain runs to 100 residues: Large ribosomal subunit protein bL21 (100 aa).

Belongs to the bacterial ribosomal protein bL21 family. As to quaternary structure, part of the 50S ribosomal subunit. Contacts protein L20.

In terms of biological role, this protein binds to 23S rRNA in the presence of protein L20. This Wolbachia sp. subsp. Drosophila simulans (strain wRi) protein is Large ribosomal subunit protein bL21.